The following is a 261-amino-acid chain: Indole-3-glycerol phosphate synthase (261 aa).

This sequence belongs to the TrpC family.

The catalysed reaction is 1-(2-carboxyphenylamino)-1-deoxy-D-ribulose 5-phosphate + H(+) = (1S,2R)-1-C-(indol-3-yl)glycerol 3-phosphate + CO2 + H2O. Its pathway is amino-acid biosynthesis; L-tryptophan biosynthesis; L-tryptophan from chorismate: step 4/5. The polypeptide is Indole-3-glycerol phosphate synthase (Paraburkholderia phymatum (strain DSM 17167 / CIP 108236 / LMG 21445 / STM815) (Burkholderia phymatum)).